The following is a 160-amino-acid chain: S-ribosylhomocysteine lyase (160 aa).

His57, His61, and Cys127 together coordinate Fe cation.

The protein belongs to the LuxS family. In terms of assembly, homodimer. Fe cation serves as cofactor.

The enzyme catalyses S-(5-deoxy-D-ribos-5-yl)-L-homocysteine = (S)-4,5-dihydroxypentane-2,3-dione + L-homocysteine. In terms of biological role, involved in the synthesis of autoinducer 2 (AI-2) which is secreted by bacteria and is used to communicate both the cell density and the metabolic potential of the environment. The regulation of gene expression in response to changes in cell density is called quorum sensing. Catalyzes the transformation of S-ribosylhomocysteine (RHC) to homocysteine (HC) and 4,5-dihydroxy-2,3-pentadione (DPD). The sequence is that of S-ribosylhomocysteine lyase from Streptococcus pyogenes serotype M4 (strain MGAS10750).